The following is a 577-amino-acid chain: Cell adhesion molecule CEACAM20 (577 aa).

The signal sequence occupies residues 1 to 30; that stretch reads MELAGFHCCSWTVILLSALLPTTWRPPAAA. The Extracellular segment spans residues 31–430; sequence HFIHRADLLS…LQSSSMSPGA (400 aa). Ig-like C2-type domains lie at 48-137, 142-223, 239-324, and 329-415; these read PLAK…ASLT, PDPV…TNLS, PNIE…LKLT, and PDQV…ASVL. An intrachain disulfide couples Cys72 to Cys120. Residues Asn78 and Asn102 are each glycosylated (N-linked (GlcNAc...) asparagine). 2 cysteine pairs are disulfide-bonded: Cys259–Cys307 and Cys358–Cys399. N-linked (GlcNAc...) asparagine glycosylation occurs at Asn289. Residues 431-451 form a helical membrane-spanning segment; it reads IAGIVIGILVAIALAIGLGYF. Residues 452 to 577 are Cytoplasmic-facing; the sequence is LYSTKDRWTR…SLYCKITPSA (126 aa). The segment at 461–568 is disordered; sequence RRRSASDTTS…YEKLLNSNHS (108 aa). A compositionally biased stretch (polar residues) spans 474-484; that stretch reads IPPTSVMQSTP. The segment covering 516 to 526 has biased composition (basic and acidic residues); that stretch reads DSPEQFYEKKP. Pro residues predominate over residues 536–551; that stretch reads KPLPQIPKQPLMPPGP. 2 positions are modified to phosphotyrosine: Tyr559 and Tyr570.

The protein belongs to the immunoglobulin superfamily. CEA family. In terms of assembly, interacts (via extracellular domain) with PTPRH (via extracellular domain); the interaction dephosphorylates CEACAM20. Interacts (phosphorylated form) with SYK (via SH2 domains); the interaction further enhances CEACAM20 phosphorylation. Post-translationally, phosphorylated on tyrosine residues by SYK, SRC and FYN in vitro. As to expression, strongly expressed in the small intestine and colon (at protein level). Minimal expression in other tissues (at protein level). Highly expressed in cecum, colon, ileum, jejunum, and testis, and also detected at lower levels in salivary gland and thymus.

The protein resides in the cell projection. It is found in the microvillus membrane. The protein localises to the apical cell membrane. Functionally, together with the tyrosine-protein kinase SYK, enhances production of the cytokine CXCL8/IL-8 via the NFKB pathway and may thus have a role in the intestinal immune response. This is Cell adhesion molecule CEACAM20 from Mus musculus (Mouse).